The primary structure comprises 366 residues: GTPase Obg (366 aa).

One can recognise an Obg domain in the interval 1-162 (MRFVDEATIN…RRLRLELKIL (162 aa)). The region spanning 163 to 335 (ADAGLLGLPN…VVDAMWRLRD (173 aa)) is the OBG-type G domain. GTP contacts are provided by residues 169–176 (GLPNAGKS), 194–198 (FTTLT), 218–221 (DIPG), 288–291 (NKID), and 316–318 (SAM). Positions 176 and 196 each coordinate Mg(2+).

It belongs to the TRAFAC class OBG-HflX-like GTPase superfamily. OBG GTPase family. In terms of assembly, monomer. It depends on Mg(2+) as a cofactor.

It is found in the cytoplasm. Functionally, an essential GTPase which binds GTP, GDP and possibly (p)ppGpp with moderate affinity, with high nucleotide exchange rates and a fairly low GTP hydrolysis rate. Plays a role in control of the cell cycle, stress response, ribosome biogenesis and in those bacteria that undergo differentiation, in morphogenesis control. This chain is GTPase Obg, found in Nitratidesulfovibrio vulgaris (strain ATCC 29579 / DSM 644 / CCUG 34227 / NCIMB 8303 / VKM B-1760 / Hildenborough) (Desulfovibrio vulgaris).